A 91-amino-acid chain; its full sequence is Small ribosomal subunit protein uS19 (91 aa).

Belongs to the universal ribosomal protein uS19 family.

Its function is as follows. Protein S19 forms a complex with S13 that binds strongly to the 16S ribosomal RNA. The protein is Small ribosomal subunit protein uS19 of Prochlorococcus marinus (strain NATL1A).